A 252-amino-acid chain; its full sequence is Neurexophilin-3 (252 aa).

A signal peptide spans 1 to 22; the sequence is MQLTRCCFVFLVQGSLYLVICG. The tract at residues 23–75 is II; the sequence is QDDGPPGSEDPEHDDHEGQPRPRVPRKRGHISPKSRPLANSTLLGLLAPPGEV. Positions 27–59 are disordered; it reads PPGSEDPEHDDHEGQPRPRVPRKRGHISPKSRP. The segment covering 45-55 has biased composition (basic residues); sequence RVPRKRGHISP. Residues asparagine 62, asparagine 127, asparagine 137, and asparagine 143 are each glycosylated (N-linked (GlcNAc...) asparagine). The tract at residues 76 to 157 is III; sequence WGVLGQPPNR…LVPPSKAVEF (82 aa). Residues 158–166 are IV (linker domain); sequence HQEQQIFIE. The tract at residues 167–252 is v (Cys-rich); it reads AKASKIFNCR…HSDTPYYPSG (86 aa).

It belongs to the neurexophilin family. In terms of processing, may be proteolytically processed at the boundary between the N-terminal non-conserved and the central conserved domain in neuron-like cells. As to expression, highest level in brain, present also in lung, kidney and testis.

The protein resides in the secreted. May be signaling molecules that resemble neuropeptides. Ligand for alpha-neurexins. The protein is Neurexophilin-3 (Nxph3) of Mus musculus (Mouse).